The sequence spans 410 residues: Serine hydroxymethyltransferase (410 aa).

Residues Leu-119 and 123 to 125 (GHL) contribute to the (6S)-5,6,7,8-tetrahydrofolate site. Lys-228 is modified (N6-(pyridoxal phosphate)lysine). A (6S)-5,6,7,8-tetrahydrofolate-binding site is contributed by 351–353 (SPF).

The protein belongs to the SHMT family. Homodimer. It depends on pyridoxal 5'-phosphate as a cofactor.

It is found in the cytoplasm. The catalysed reaction is (6R)-5,10-methylene-5,6,7,8-tetrahydrofolate + glycine + H2O = (6S)-5,6,7,8-tetrahydrofolate + L-serine. The protein operates within one-carbon metabolism; tetrahydrofolate interconversion. It functions in the pathway amino-acid biosynthesis; glycine biosynthesis; glycine from L-serine: step 1/1. In terms of biological role, catalyzes the reversible interconversion of serine and glycine with tetrahydrofolate (THF) serving as the one-carbon carrier. This reaction serves as the major source of one-carbon groups required for the biosynthesis of purines, thymidylate, methionine, and other important biomolecules. Also exhibits THF-independent aldolase activity toward beta-hydroxyamino acids, producing glycine and aldehydes, via a retro-aldol mechanism. In Clostridium perfringens (strain 13 / Type A), this protein is Serine hydroxymethyltransferase.